Reading from the N-terminus, the 141-residue chain is Transcription antitermination protein NusB (141 aa).

The protein belongs to the NusB family.

Involved in transcription antitermination. Required for transcription of ribosomal RNA (rRNA) genes. Binds specifically to the boxA antiterminator sequence of the ribosomal RNA (rrn) operons. The sequence is that of Transcription antitermination protein NusB from Neisseria gonorrhoeae (strain ATCC 700825 / FA 1090).